We begin with the raw amino-acid sequence, 546 residues long: Probable E3 ubiquitin-protein ligase NGR_a03640 (546 aa).

A disordered region spans residues 1–70 (MNVQRPGLAV…RPWEGRPQEA (70 aa)). The tract at residues 1–248 (MNVQRPGLAV…YAGPQIFLPM (248 aa)) is interaction with target proteins. A compositionally biased stretch (low complexity) spans 22-48 (SEPGSPAAAARWVEASTEAEASAASSS). Residues 58–67 (AEERPWEGRP) are compositionally biased toward basic and acidic residues. LRR repeat units follow at residues 104 to 125 (GLRRLNVNNNQLGDLPDTLPGT), 126 to 144 (LLELEASENRLTRLPDLPA), 145 to 166 (GLQRLNVENNRLTNLPEPLPAA), 167 to 186 (LEWLGAGYNQLTRLPEMIPP), and 187 to 208 (ELIWLGARNNQLTSVPESLLTQ). The tract at residues 249-256 (GPVELARR) is linker. The NEL domain maps to 257–546 (PLHEVVADWL…KVLRGRGLEL (290 aa)). Residues 257-546 (PLHEVVADWL…KVLRGRGLEL (290 aa)) are E3 ubiquitin-protein ligase catalytic domain. Cys-338 serves as the catalytic Glycyl thioester intermediate.

It belongs to the LRR-containing bacterial E3 ligase family. In terms of processing, ubiquitinated in the presence of host E1 ubiquitin-activating enzyme, E2 ubiquitin-conjugating enzyme and ubiquitin.

The protein resides in the secreted. It localises to the host cytoplasm. In terms of biological role, effector proteins function to alter host cell physiology and promote bacterial survival in host tissues. This protein is an E3 ubiquitin ligase that interferes with host's ubiquitination pathway. This chain is Probable E3 ubiquitin-protein ligase NGR_a03640, found in Sinorhizobium fredii (strain NBRC 101917 / NGR234).